Consider the following 403-residue polypeptide: Imidazolonepropionase (403 aa).

Residues H68 and H70 each contribute to the Fe(3+) site. Residues H68 and H70 each contribute to the Zn(2+) site. Residues R77, Y140, and H173 each contribute to the 4-imidazolone-5-propanoate site. Position 140 (Y140) interacts with N-formimidoyl-L-glutamate. H238 contacts Fe(3+). Residue H238 coordinates Zn(2+). Q241 lines the 4-imidazolone-5-propanoate pocket. D313 is a binding site for Fe(3+). A Zn(2+)-binding site is contributed by D313. N-formimidoyl-L-glutamate contacts are provided by N315 and G317. T318 lines the 4-imidazolone-5-propanoate pocket.

It belongs to the metallo-dependent hydrolases superfamily. HutI family. Requires Zn(2+) as cofactor. It depends on Fe(3+) as a cofactor.

It localises to the cytoplasm. The catalysed reaction is 4-imidazolone-5-propanoate + H2O = N-formimidoyl-L-glutamate. The protein operates within amino-acid degradation; L-histidine degradation into L-glutamate; N-formimidoyl-L-glutamate from L-histidine: step 3/3. Catalyzes the hydrolytic cleavage of the carbon-nitrogen bond in imidazolone-5-propanoate to yield N-formimidoyl-L-glutamate. It is the third step in the universal histidine degradation pathway. This Psychromonas ingrahamii (strain DSM 17664 / CCUG 51855 / 37) protein is Imidazolonepropionase.